Consider the following 220-residue polypeptide: MTNAFFLTGTDTEVGKTVASRAILHAAASANIKMAGYKPVASDSTPTDEGMRNSDALYIQDASVVELDYQEVNPYAFEAAISPHLAAEQEGQVIDFDVLSAGLEHLKSKSEAVLIEGAGGWRVPISHTDFLSSWVKREKLPVILVVGVKLGCLSHAILTAEAIKNDGLELVGWVANRINPGTENYADIIKMLEKNLPGKKMGEIPYMPALKNVTYQSILI.

13-18 (EVGKTV) is an ATP binding site. A Mg(2+)-binding site is contributed by Thr-17. Residue Lys-38 is part of the active site. Ser-42 provides a ligand contact to substrate. ATP contacts are provided by residues Asp-55, 116-119 (EGAG), 176-177 (NR), and Asn-212. Mg(2+) contacts are provided by Asp-55 and Glu-116.

It belongs to the dethiobiotin synthetase family. In terms of assembly, homodimer. It depends on Mg(2+) as a cofactor.

The protein resides in the cytoplasm. The catalysed reaction is (7R,8S)-7,8-diammoniononanoate + CO2 + ATP = (4R,5S)-dethiobiotin + ADP + phosphate + 3 H(+). Its pathway is cofactor biosynthesis; biotin biosynthesis; biotin from 7,8-diaminononanoate: step 1/2. Functionally, catalyzes a mechanistically unusual reaction, the ATP-dependent insertion of CO2 between the N7 and N8 nitrogen atoms of 7,8-diaminopelargonic acid (DAPA, also called 7,8-diammoniononanoate) to form a ureido ring. This Photobacterium profundum (strain SS9) protein is ATP-dependent dethiobiotin synthetase BioD.